The following is a 909-amino-acid chain: Protein translocase subunit SecA (909 aa).

ATP is bound by residues Q87, 105–109, and D507; that span reads GEGKT. Disordered stretches follow at residues 567–586 and 859–909; these read RRID…PGSS and YSEA…GKLD. Residues 865-889 show a composition bias toward basic and acidic residues; the sequence is EHQSVTEGHEAKQQPFVRKSDKIGR. C893, C895, C904, and H905 together coordinate Zn(2+). A compositionally biased stretch (basic residues) spans 899 to 909; that stretch reads RKYKQCHGKLD.

Belongs to the SecA family. In terms of assembly, monomer and homodimer. Part of the essential Sec protein translocation apparatus which comprises SecA, SecYEG and auxiliary proteins SecDF-YajC and YidC. Zn(2+) serves as cofactor.

The protein resides in the cell inner membrane. It localises to the cytoplasm. It catalyses the reaction ATP + H2O + cellular proteinSide 1 = ADP + phosphate + cellular proteinSide 2.. Part of the Sec protein translocase complex. Interacts with the SecYEG preprotein conducting channel. Has a central role in coupling the hydrolysis of ATP to the transfer of proteins into and across the cell membrane, serving both as a receptor for the preprotein-SecB complex and as an ATP-driven molecular motor driving the stepwise translocation of polypeptide chains across the membrane. The sequence is that of Protein translocase subunit SecA from Nitrosomonas eutropha (strain DSM 101675 / C91 / Nm57).